The chain runs to 1048 residues: Pleckstrin homology domain-containing family A member 6 (1048 aa).

Over residues 1 to 22 (MSNKTGGKRPATTNSDIPNHNM) the composition is skewed to polar residues. The segment at 1-36 (MSNKTGGKRPATTNSDIPNHNMVSEVPPERPSVRAT) is disordered. One can recognise a PH domain in the interval 59-158 (PVTKAGWLFK…WIQAMGEAAR (100 aa)). Disordered stretches follow at residues 165 to 318 (QKSV…MNQL) and 448 to 467 (SLQP…SYSR). A compositionally biased stretch (basic and acidic residues) spans 201 to 233 (PEPEAKTRGEGDGRGCEKAERRPERPEVKKEPP). Residues S247 and S251 each carry the phosphoserine modification. The segment covering 267–290 (AQPNGWQYHSPSRPGSTAFPSQDG) has biased composition (polar residues). S314, S459, S461, and S472 each carry phosphoserine. The span at 456-465 (VPRSPSQGSY) shows a compositional bias: polar residues. Position 492 is a phosphotyrosine (Y492). The residue at position 591 (S591) is a Phosphoserine. Positions 663–746 (RKNNPSRGTD…HQTLPLDTPR (84 aa)) are disordered. The span at 687-711 (SSNSPASPLSSASLTSPLSPFSLVS) shows a compositional bias: low complexity. Positions 712 to 721 (GSQGSPTKPG) are enriched in polar residues. Phosphothreonine is present on T744. The residue at position 777 (S777) is a Phosphoserine. T784 carries the post-translational modification Phosphothreonine. Residues 793–858 (ASGLTNGLSS…PAPDPSPRPA (66 aa)) form a disordered region. The span at 794 to 803 (SGLTNGLSSQ) shows a compositional bias: polar residues. S801 carries the post-translational modification Phosphoserine. Residues 815–827 (GKVKMSVEEQIDR) show a composition bias toward basic and acidic residues. A compositionally biased stretch (basic residues) spans 828 to 842 (MRRHQSGSMREKRRS). Residues S848, S854, and S867 each carry the phosphoserine modification. Residue T920 is modified to Phosphothreonine. S940 carries the post-translational modification Phosphoserine. Disordered regions lie at residues 968–989 (PIGE…QEQE) and 1005–1048 (RGRM…TMRV). Position 1015 is a phosphothreonine (T1015). Pro residues predominate over residues 1016–1030 (PSPPTSPASPAPPAN). A Phosphoserine modification is found at S1017. T1020 carries the phosphothreonine modification. 2 positions are modified to phosphoserine: S1021 and S1024.

Highly expressed in heart, kidney and throughout the brain.

The sequence is that of Pleckstrin homology domain-containing family A member 6 (PLEKHA6) from Homo sapiens (Human).